We begin with the raw amino-acid sequence, 396 residues long: Elongation factor Tu (396 aa).

The 195-residue stretch at 11–205 (KPHVNIGTIG…VVDEYIPTPK (195 aa)) folds into the tr-type G domain. The G1 stretch occupies residues 20–27 (GHVDHGKT). GTP is bound at residue 20–27 (GHVDHGKT). A Mg(2+)-binding site is contributed by threonine 27. A G2 region spans residues 61 to 65 (GITIN). The G3 stretch occupies residues 82–85 (DAPG). Residues 82 to 86 (DAPGH) and 137 to 140 (NKTD) each bind GTP. Residues 137–140 (NKTD) are G4. The tract at residues 175–177 (SAL) is G5.

This sequence belongs to the TRAFAC class translation factor GTPase superfamily. Classic translation factor GTPase family. EF-Tu/EF-1A subfamily. Monomer.

It is found in the cytoplasm. It catalyses the reaction GTP + H2O = GDP + phosphate + H(+). Its function is as follows. GTP hydrolase that promotes the GTP-dependent binding of aminoacyl-tRNA to the A-site of ribosomes during protein biosynthesis. In Limosilactobacillus fermentum (strain NBRC 3956 / LMG 18251) (Lactobacillus fermentum), this protein is Elongation factor Tu.